Here is a 526-residue protein sequence, read N- to C-terminus: Light-independent protochlorophyllide reductase subunit B (526 aa).

Aspartate 36 lines the [4Fe-4S] cluster pocket. The active-site Proton donor is aspartate 284. 419 to 420 (GL) lines the substrate pocket.

It belongs to the ChlB/BchB/BchZ family. Protochlorophyllide reductase is composed of three subunits; BchL, BchN and BchB. Forms a heterotetramer of two BchB and two BchN subunits. The cofactor is [4Fe-4S] cluster.

The enzyme catalyses chlorophyllide a + oxidized 2[4Fe-4S]-[ferredoxin] + 2 ADP + 2 phosphate = protochlorophyllide a + reduced 2[4Fe-4S]-[ferredoxin] + 2 ATP + 2 H2O. Its pathway is porphyrin-containing compound metabolism; bacteriochlorophyll biosynthesis (light-independent). Component of the dark-operative protochlorophyllide reductase (DPOR) that uses Mg-ATP and reduced ferredoxin to reduce ring D of protochlorophyllide (Pchlide) to form chlorophyllide a (Chlide). This reaction is light-independent. The NB-protein (BchN-BchB) is the catalytic component of the complex. This chain is Light-independent protochlorophyllide reductase subunit B, found in Halorhodospira halophila (strain DSM 244 / SL1) (Ectothiorhodospira halophila (strain DSM 244 / SL1)).